We begin with the raw amino-acid sequence, 191 residues long: MDKTLSREEAKQLMQLLCLDMSCWGNLPLMRRQYLVKCKEYHPDKGGNEESMKLLNSLYLKLQDSVSSVHDLNEEEDNIWQSSQVYCKDLCCNKFRLVGAIYGEYYEAYIMKQWDVCIHGYNHECQCIHCILSKYHKEKYKIYRKPPVWIECYCYKCYREWFFFPISMQTFFFWKVIIFNTEIRAVQPLLR.

Residue methionine 1 is modified to N-acetylmethionine; by host. One can recognise a J domain in the interval 12-80; that stretch reads QLMQLLCLDM…DLNEEEDNIW (69 aa). The segment at 117–130 adopts a C4-type; atypical zinc-finger fold; it reads CIHGYNHECQCIHC. An H1C3-type; atypical zinc finger spans residues 136-157; it reads HKEKYKIYRKPPVWIECYCYKC.

Interacts with host PPP2R1A; the interaction inhibits PP2A activity.

The protein resides in the host cytoplasm. It is found in the host nucleus. In terms of biological role, promotes efficient viral genome replication by accelerating both G1 and S phase progression of the cell cycle. Inhibits host PP2A by binding to the A subunit, thereby displacing lower affinity regulatory B subunit. Inactivation of PP2A in turn results in the transactivation of cyclin A and cyclin D1 promoters. Late during the infection cycle, ST may induce dephosphorylation of host MTOR, leading to the inhibition of cap-dependent translation. May establish and maintain high levels of viral genomes during persistent infection in cell culture. The polypeptide is Small t antigen (Homo sapiens (Human)).